The following is a 149-amino-acid chain: Transcriptional repressor NrdR (149 aa).

The segment at 3–34 (CPFCSATDTKVIDSRLVADGHQVRRRRECVQC) is a zinc-finger region. An ATP-cone domain is found at 49 to 139 (PRVVKQDGSR…VYRAFEDVSE (91 aa)).

Belongs to the NrdR family. Zn(2+) serves as cofactor.

Functionally, negatively regulates transcription of bacterial ribonucleotide reductase nrd genes and operons by binding to NrdR-boxes. The sequence is that of Transcriptional repressor NrdR from Shewanella piezotolerans (strain WP3 / JCM 13877).